Reading from the N-terminus, the 198-residue chain is Ribonuclease HII (198 aa).

An RNase H type-2 domain is found at 6-198 (EQIAGVDEVG…APCQASLLPD (193 aa)). A divalent metal cation contacts are provided by Asp-12, Glu-13, and Asp-108.

This sequence belongs to the RNase HII family. It depends on Mn(2+) as a cofactor. Requires Mg(2+) as cofactor.

Its subcellular location is the cytoplasm. The enzyme catalyses Endonucleolytic cleavage to 5'-phosphomonoester.. In terms of biological role, endonuclease that specifically degrades the RNA of RNA-DNA hybrids. In Acaryochloris marina (strain MBIC 11017), this protein is Ribonuclease HII.